The chain runs to 717 residues: Delta-1-pyrroline-5-carboxylate synthase (717 aa).

Residues 1-296 (MDAVDSTRAF…WAPVGDVGAR (296 aa)) are glutamate 5-kinase. Substrate-binding residues include Ser60, Asp157, and Asn176. Residues 196-197 (SD) and 236-242 (RGGMTAK) contribute to the ATP site. Residues 297 to 717 (DMAVAARESS…YTHKDLTSHA (421 aa)) form a gamma-glutamyl phosphate reductase region.

It in the N-terminal section; belongs to the glutamate 5-kinase family. This sequence in the C-terminal section; belongs to the gamma-glutamyl phosphate reductase family. As to expression, expressed at high levels in leaves and is inducible in roots subjected to salt stress.

The enzyme catalyses L-glutamate + ATP = L-glutamyl 5-phosphate + ADP. It catalyses the reaction L-glutamate 5-semialdehyde + phosphate + NADP(+) = L-glutamyl 5-phosphate + NADPH + H(+). It functions in the pathway amino-acid biosynthesis; L-proline biosynthesis; L-glutamate 5-semialdehyde from L-glutamate: step 1/2. The protein operates within amino-acid biosynthesis; L-proline biosynthesis; L-glutamate 5-semialdehyde from L-glutamate: step 2/2. Its activity is regulated as follows. Feedback regulated by proline. Functionally, P5CS plays a key role in proline biosynthesis, leading to osmoregulation in plants. This chain is Delta-1-pyrroline-5-carboxylate synthase, found in Actinidia deliciosa (Kiwi).